We begin with the raw amino-acid sequence, 146 residues long: Anti-sigma F factor (146 aa).

The protein belongs to the anti-sigma-factor family.

It catalyses the reaction L-seryl-[protein] + ATP = O-phospho-L-seryl-[protein] + ADP + H(+). The enzyme catalyses L-threonyl-[protein] + ATP = O-phospho-L-threonyl-[protein] + ADP + H(+). In terms of biological role, binds to sigma F and blocks its ability to form an RNA polymerase holoenzyme (E-sigma F). Phosphorylates SpoIIAA on a serine residue. This phosphorylation may enable SpoIIAA to act as an anti-anti-sigma factor that counteracts SpoIIAB and thus releases sigma F from inhibition. The chain is Anti-sigma F factor from Shouchella clausii (strain KSM-K16) (Alkalihalobacillus clausii).